Consider the following 902-residue polypeptide: Calcium-activated chloride channel regulator 3A-1 (902 aa).

A signal peptide spans methionine 1–serine 21. The metalloprotease domain stretch occupies residues aspartate 45 to asparagine 199. The N-linked (GlcNAc...) asparagine glycan is linked to asparagine 75. Zn(2+) is bound at residue histidine 155. Glutamate 156 is a catalytic residue. Positions 159 and 166 each coordinate Zn(2+). The VWFA domain occupies valine 308–isoleucine 476. N-linked (GlcNAc...) asparagine glycosylation is found at asparagine 504, asparagine 515, asparagine 630, asparagine 687, asparagine 697, asparagine 809, and asparagine 814.

Belongs to the CLCR family. In terms of assembly, part of a complex composed of complement component C3, CLCA1/CLCA3, A2ML1/OH and ALB/serum albumin. Post-translationally, glycosylated. The 130-kDa product is autoproteolytically processed by the metalloprotease domain and yields two subunits, a 90-kDa protein and a group of 32- to 38-kDa proteins. The cleavage is necessary for calcium-activated chloride channel (CaCC) activation activity. As to expression, highly expressed in skin and spleen, and at lower levels in kidney and liver. Also detected in lung and brain. Not detected in lung or brain. In lung, localizes to respiratory epithelia of the bronchi and trachea and the submucosal glands.

It localises to the cell membrane. In terms of biological role, plays a role in modulating chloride current across the plasma membrane in a calcium-dependent manner. The protein is Calcium-activated chloride channel regulator 3A-1 of Mus musculus (Mouse).